The following is a 696-amino-acid chain: Neurogenic protein big brain (696 aa).

The Cytoplasmic segment spans residues 1–71 (MADESLHTVP…LEFWRSIISE (71 aa)). Residue Ser-46 is modified to Phosphoserine. Thr-47 bears the Phosphothreonine mark. Residues 72–93 (CLASFMYVFIVCGAAAGVGVGA) traverse the membrane as a helical segment. At 94 to 97 (SVSS) the chain is on the extracellular side. The chain crosses the membrane as a helical span at residues 98 to 118 (VLLATALASGLAMATLTQCFL). The Cytoplasmic segment spans residues 119–143 (HISGAHINPAVTLALCVVRSISPIR). The NPA 1 motif lies at 126–128 (NPA). The helical transmembrane segment at 144–167 (AAMYITAQCGGGIAGAALLYGVTV) threads the bilayer. Topologically, residues 168-189 (PGYQGNLQAAISHSAALAAWER) are extracellular. The helical transmembrane segment at 190–208 (FGVEFILTFLVVLCYFVST) threads the bilayer. The Cytoplasmic portion of the chain corresponds to 209–213 (DPMKK). A helical transmembrane segment spans residues 214 to 234 (FMGNSAASIGCAYSACCFVSM). Over 235–256 (PYLNPARSLGPSFVLNKWDSHW) the chain is Extracellular. Positions 238–240 (NPA) match the NPA 2 motif. The chain crosses the membrane as a helical span at residues 257 to 273 (VYWFGPLVGGMASGLVY). Tyr-273 bears the Phosphotyrosine; by Src mark. Over 274-696 (EYIFNSRNRN…HYGMLPLRPN (423 aa)) the chain is Cytoplasmic. A Phosphoserine modification is found at Ser-300. The segment at 314 to 345 (NKYQQSQGTYPRGQSNGNGGGQAAGNGQHQAA) is disordered. Tyr-367 is subject to Phosphotyrosine; by Abl. Phosphotyrosine; by Src is present on Tyr-384. Position 394 is a phosphoserine (Ser-394). Disordered regions lie at residues 436–634 (MRTQ…KVSA) and 650–696 (TSQG…LRPN). Composition is skewed to low complexity over residues 439–451 (QQQQ…QQQQ) and 462–472 (QNQNVQNQMQQ). Tyr-478 bears the Phosphotyrosine; by Src mark. The span at 487–532 (QQQPIQQQQQQQQQQQLQQQQPNMGVQQQQMQPPPQMMSDPQQQPQ) shows a compositional bias: low complexity. Over residues 549-558 (GNHKYDRRDP) the composition is skewed to basic and acidic residues. Ser-576 is subject to Phosphoserine. Residues 576–587 (SDDSSYGSYHGS) show a composition bias toward low complexity. Over residues 599–616 (EPSPPPPPMLMYAPPPQP) the composition is skewed to pro residues. Tyr-610 carries the post-translational modification Phosphotyrosine; by Abl. The segment covering 659–686 (QQQQQQQQQQQQQQQQQQQQMMMQQQQQ) has biased composition (low complexity).

The protein belongs to the MIP/aquaporin (TC 1.A.8) family. Post-translationally, phosphorylated at its C-terminus. In terms of tissue distribution, detected in all tissues with neurogenic abilities, for example the neurogenic ectoderm.

It localises to the membrane. Essential for proper differentiation of ectoderm. Acts synergistically with neurogenic locus proteins Notch and Delta during the separation of neural and epidermal cell lineages in response to the lateral inhibition signal. Voltage-insensitive monovalent cation channel. Ion transport is blocked by the presence of divalent cations. This Drosophila melanogaster (Fruit fly) protein is Neurogenic protein big brain (bib).